The primary structure comprises 116 residues: Vesicle-associated membrane protein 5 (116 aa).

Residues 1 to 72 (MAGKELERCQ…RWENARCRIY (72 aa)) lie on the Cytoplasmic side of the membrane. The 61-residue stretch at 5–65 (ELERCQRQAD…KTLAQKKRWE (61 aa)) folds into the v-SNARE coiled-coil homology domain. Ser41, Ser48, and Ser49 each carry phosphoserine. Residues 73–93 (MGLAVGIALLILLIVLLVIFL) form a helical; Anchor for type IV membrane protein membrane-spanning segment. Over 94–116 (PQSSKGSSAPQVQDAGPASGPGE) the chain is Vesicular. The segment at 97–116 (SKGSSAPQVQDAGPASGPGE) is disordered.

This sequence belongs to the synaptobrevin family.

Its subcellular location is the cell membrane. It is found in the endomembrane system. The protein resides in the golgi apparatus. It localises to the trans-Golgi network membrane. May participate in trafficking events that are associated with myogenesis, such as myoblast fusion and/or GLUT4 trafficking. This Bos taurus (Bovine) protein is Vesicle-associated membrane protein 5 (VAMP5).